The sequence spans 102 residues: uncharacterized protein (102 aa).

An N-terminal signal peptide occupies residues 1 to 22; the sequence is MKFKYGATLFSGFLGLSAILAA. Residue Cys23 is the site of N-palmitoyl cysteine attachment. Cys23 carries the S-diacylglycerol cysteine lipid modification.

Belongs to the MG185/MG260 family.

The protein resides in the cell membrane. This is an uncharacterized protein from Mycoplasma pneumoniae (strain ATCC 29342 / M129 / Subtype 1) (Mycoplasmoides pneumoniae).